The chain runs to 200 residues: dITP/XTP pyrophosphatase (200 aa).

Residue 8-13 (TGNQGK) coordinates substrate. Asp-69 acts as the Proton acceptor in catalysis. Position 69 (Asp-69) interacts with Mg(2+). Substrate is bound by residues Ser-70, 154-157 (FGYD), Lys-177, and 182-183 (HR).

Belongs to the HAM1 NTPase family. In terms of assembly, homodimer. Mg(2+) serves as cofactor.

The enzyme catalyses XTP + H2O = XMP + diphosphate + H(+). The catalysed reaction is dITP + H2O = dIMP + diphosphate + H(+). It carries out the reaction ITP + H2O = IMP + diphosphate + H(+). Functionally, pyrophosphatase that catalyzes the hydrolysis of nucleoside triphosphates to their monophosphate derivatives, with a high preference for the non-canonical purine nucleotides XTP (xanthosine triphosphate), dITP (deoxyinosine triphosphate) and ITP. Seems to function as a house-cleaning enzyme that removes non-canonical purine nucleotides from the nucleotide pool, thus preventing their incorporation into DNA/RNA and avoiding chromosomal lesions. This Vibrio parahaemolyticus serotype O3:K6 (strain RIMD 2210633) protein is dITP/XTP pyrophosphatase.